A 185-amino-acid chain; its full sequence is Protein-arginine kinase activator protein (185 aa).

Phosphoarginine is present on residues arginine 115 and arginine 169. The UVR domain maps to 139 to 174; the sequence is RRQIDMLKKELESLIHQEEFENAAHVRDQIRLLEQS.

In terms of assembly, interacts with McsB. In terms of processing, phosphorylated on Arg residues by McsB.

Activates the phosphorylation activity of the protein-arginine kinase McsB. Is required for the delocalization of competence proteins from the cell poles. In Bacillus subtilis (strain 168), this protein is Protein-arginine kinase activator protein (mcsA).